A 990-amino-acid chain; its full sequence is Pro-apoptotic serine protease NMA111 (990 aa).

Residues 1-32 (MSVTNSNRKRSLSEVSEGSDPEAPAKTRNSYT) form a disordered region. Residues 73–263 (VVSIHFSQVA…LPLDRILRAL (191 aa)) form a serine protease region. Catalysis depends on charge relay system residues histidine 111, aspartate 142, and serine 225. 2 PDZ domains span residues 290–368 (RRLG…QRGG) and 758–843 (SILT…VREG).

The protein belongs to the peptidase S1C family.

It localises to the nucleus. Nuclear serine protease which mediates apoptosis. This chain is Pro-apoptotic serine protease NMA111 (NMA111), found in Vanderwaltozyma polyspora (strain ATCC 22028 / DSM 70294 / BCRC 21397 / CBS 2163 / NBRC 10782 / NRRL Y-8283 / UCD 57-17) (Kluyveromyces polysporus).